Reading from the N-terminus, the 363-residue chain is Aminomethyltransferase (363 aa).

This sequence belongs to the GcvT family. In terms of assembly, the glycine cleavage system is composed of four proteins: P, T, L and H.

The catalysed reaction is N(6)-[(R)-S(8)-aminomethyldihydrolipoyl]-L-lysyl-[protein] + (6S)-5,6,7,8-tetrahydrofolate = N(6)-[(R)-dihydrolipoyl]-L-lysyl-[protein] + (6R)-5,10-methylene-5,6,7,8-tetrahydrofolate + NH4(+). Its function is as follows. The glycine cleavage system catalyzes the degradation of glycine. In Staphylococcus haemolyticus (strain JCSC1435), this protein is Aminomethyltransferase.